We begin with the raw amino-acid sequence, 39 residues long: Cytochrome b559 subunit beta (39 aa).

Residues 14–30 (WLAVHGLAVPTVFFLGS) form a helical membrane-spanning segment. A heme-binding site is contributed by His-18.

Belongs to the PsbE/PsbF family. Heterodimer of an alpha subunit and a beta subunit. PSII is composed of 1 copy each of membrane proteins PsbA, PsbB, PsbC, PsbD, PsbE, PsbF, PsbH, PsbI, PsbJ, PsbK, PsbL, PsbM, PsbT, PsbX, PsbY, PsbZ, Psb30/Ycf12, at least 3 peripheral proteins of the oxygen-evolving complex and a large number of cofactors. It forms dimeric complexes. The cofactor is heme b.

The protein localises to the plastid. It is found in the chloroplast thylakoid membrane. Functionally, this b-type cytochrome is tightly associated with the reaction center of photosystem II (PSII). PSII is a light-driven water:plastoquinone oxidoreductase that uses light energy to abstract electrons from H(2)O, generating O(2) and a proton gradient subsequently used for ATP formation. It consists of a core antenna complex that captures photons, and an electron transfer chain that converts photonic excitation into a charge separation. The protein is Cytochrome b559 subunit beta of Welwitschia mirabilis (Tree tumbo).